We begin with the raw amino-acid sequence, 170 residues long: Macro domain-containing protein DR_2288 (170 aa).

The Macro domain maps to 1 to 170 (MPLELVQGDI…HVFERALAQL (170 aa)).

It belongs to the MacroD-type family.

The protein is Macro domain-containing protein DR_2288 of Deinococcus radiodurans (strain ATCC 13939 / DSM 20539 / JCM 16871 / CCUG 27074 / LMG 4051 / NBRC 15346 / NCIMB 9279 / VKM B-1422 / R1).